We begin with the raw amino-acid sequence, 229 residues long: Potassium/proton antiporter CemA (229 aa).

3 consecutive transmembrane segments (helical) span residues A6–C26, I107–G127, and I189–I209.

It belongs to the CemA family.

The protein resides in the plastid. Its subcellular location is the chloroplast inner membrane. The enzyme catalyses K(+)(in) + H(+)(out) = K(+)(out) + H(+)(in). Its function is as follows. Contributes to K(+)/H(+) antiport activity by supporting proton efflux to control proton extrusion and homeostasis in chloroplasts in a light-dependent manner to modulate photosynthesis. Prevents excessive induction of non-photochemical quenching (NPQ) under continuous-light conditions. Indirectly promotes efficient inorganic carbon uptake into chloroplasts. This is Potassium/proton antiporter CemA from Nasturtium officinale (Watercress).